The chain runs to 338 residues: Eukaryotic translation initiation factor 3 subunit H (338 aa).

The region spanning 22 to 154 (VQCDGLAVMK…LKAYRLTPQA (133 aa)) is the MPN domain.

The protein belongs to the eIF-3 subunit H family. Component of the eukaryotic translation initiation factor 3 (eIF-3) complex. The eIF-3 complex interacts with pix. Interacts with mxt.

Its subcellular location is the cytoplasm. Functionally, component of the eukaryotic translation initiation factor 3 (eIF-3) complex, which is involved in protein synthesis of a specialized repertoire of mRNAs and, together with other initiation factors, stimulates binding of mRNA and methionyl-tRNAi to the 40S ribosome. The eIF-3 complex specifically targets and initiates translation of a subset of mRNAs involved in cell proliferation. In Drosophila melanogaster (Fruit fly), this protein is Eukaryotic translation initiation factor 3 subunit H.